The sequence spans 174 residues: Large ribosomal subunit protein uL10 (174 aa).

This sequence belongs to the universal ribosomal protein uL10 family. Part of the ribosomal stalk of the 50S ribosomal subunit. The N-terminus interacts with L11 and the large rRNA to form the base of the stalk. The C-terminus forms an elongated spine to which L12 dimers bind in a sequential fashion forming a multimeric L10(L12)X complex.

In terms of biological role, forms part of the ribosomal stalk, playing a central role in the interaction of the ribosome with GTP-bound translation factors. This Methylobacillus flagellatus (strain ATCC 51484 / DSM 6875 / VKM B-1610 / KT) protein is Large ribosomal subunit protein uL10.